The primary structure comprises 288 residues: Orotidine 5'-phosphate decarboxylase (288 aa).

Lys99 functions as the Proton donor in the catalytic mechanism.

This sequence belongs to the OMP decarboxylase family. Type 2 subfamily.

The catalysed reaction is orotidine 5'-phosphate + H(+) = UMP + CO2. The protein operates within pyrimidine metabolism; UMP biosynthesis via de novo pathway; UMP from orotate: step 2/2. This is Orotidine 5'-phosphate decarboxylase (pyrF) from Myxococcus xanthus (strain DK1622).